The chain runs to 180 residues: Ribulose bisphosphate carboxylase small subunit, chloroplastic 2 (180 aa).

The N-terminal 56 residues, 1 to 56 (MASSVISSAAVATRSNVTQASMVAPFTGLKSSATFPVTKKQNLDITSIASNGGRVS), are a transit peptide targeting the chloroplast.

It belongs to the RuBisCO small chain family. In terms of assembly, heterohexadecamer of 8 large and 8 small subunits. (Microbial infection) Binds to tobamovirus movement protein; this interaction seems required for viral systemic movement.

The protein resides in the plastid. It is found in the chloroplast. Its subcellular location is the cell junction. It localises to the plasmodesma. Its function is as follows. RuBisCO catalyzes two reactions: the carboxylation of D-ribulose 1,5-bisphosphate, the primary event in carbon dioxide fixation, as well as the oxidative fragmentation of the pentose substrate. Both reactions occur simultaneously and in competition at the same active site. Although the small subunit is not catalytic it is essential for maximal activity. Involved in antiviral defenses. In Solanum lycopersicum (Tomato), this protein is Ribulose bisphosphate carboxylase small subunit, chloroplastic 2.